The sequence spans 311 residues: Systemic RNA interference defective protein 2 (311 aa).

The first 20 residues, 1-20 (MPRFVYFCFALIALLPISWT), serve as a signal peptide directing secretion. Over 21 to 188 (MDGILITDVE…EETKTVVNKN (168 aa)) the chain is Extracellular. The chain crosses the membrane as a helical span at residues 189–209 (GGAVAVAVIEGIALIAILAFL). At 210-311 (GYRTMVNHKL…NDPFATLESW (102 aa)) the chain is on the cytoplasmic side. Polar residues predominate over residues 287–301 (NSSAAQPSTTSNGQF). The tract at residues 287–311 (NSSAAQPSTTSNGQFNDPFATLESW) is disordered.

In terms of tissue distribution, expressed in the intestinal lumen. Also present, at lower levels, in the excretory duct cells.

The protein resides in the apical cell membrane. It localises to the cytoplasm. Plays a role in RNA-mediated gene silencing by mediating endocytic uptake of double-stranded RNA (dsRNA) ingested from the environment into intestinal cells from the intestinal lumen. Selective for dsRNAs of at least 50 bp. Required for avoidance behavior induced by small RNAs derived from pathogenic bacteria such as P.aeruginosa. This is Systemic RNA interference defective protein 2 from Caenorhabditis elegans.